The chain runs to 166 residues: Keratin, type II cytoskeletal 68 kDa, component IB (166 aa).

The IF rod domain maps to 1–41 (EAKDDLARLLRDYQDAMNVKLALDVEIATYRKLLEGEECRM). The interval 1–41 (EAKDDLARLLRDYQDAMNVKLALDVEIATYRKLLEGEECRM) is coil 2B. The segment at 42 to 166 (SGECPSAVSI…FSQSSQRTSR (125 aa)) is tail. Residues 122-146 (GFGGGSSGFGSGSGGRSGVSGGGLS) are compositionally biased toward gly residues. The interval 122 to 166 (GFGGGSSGFGSGSGGRSGVSGGGLSSGSSRGGSVRFSQSSQRTSR) is disordered. The segment covering 147–166 (SGSSRGGSVRFSQSSQRTSR) has biased composition (low complexity).

The protein belongs to the intermediate filament family. In terms of assembly, heterotetramer of two type I and two type II keratins.

This Bos taurus (Bovine) protein is Keratin, type II cytoskeletal 68 kDa, component IB.